Consider the following 236-residue polypeptide: Exosome complex component Rrp4 (236 aa).

Residues 64-133 (GDKVIGKVIE…EIKESWLTLK (70 aa)) enclose the S1 motif domain. Positions 141–199 (EGGHMVLIHASRVPRVIGKGGGMVNMVKELTATRIIIGQNGLIWIDGPIEGVTMAIAAI) constitute a KH domain.

It belongs to the RRP4 family. Component of the archaeal exosome complex. Forms a trimer of Rrp4 and/or Csl4 subunits. The trimer associates with a hexameric ring-like arrangement composed of 3 Rrp41-Rrp42 heterodimers.

It is found in the cytoplasm. Its function is as follows. Non-catalytic component of the exosome, which is a complex involved in RNA degradation. Increases the RNA binding and the efficiency of RNA degradation. Confers strong poly(A) specificity to the exosome. In Thermoplasma acidophilum (strain ATCC 25905 / DSM 1728 / JCM 9062 / NBRC 15155 / AMRC-C165), this protein is Exosome complex component Rrp4.